Here is a 385-residue protein sequence, read N- to C-terminus: Mannitol-1-phosphate 5-dehydrogenase (385 aa).

NAD(+) is bound at residue 3–14 (AVHFGAGNIGRG).

It belongs to the mannitol dehydrogenase family.

The catalysed reaction is D-mannitol 1-phosphate + NAD(+) = beta-D-fructose 6-phosphate + NADH + H(+). The protein is Mannitol-1-phosphate 5-dehydrogenase of Geobacillus thermodenitrificans (strain NG80-2).